A 266-amino-acid chain; its full sequence is Large ribosomal subunit protein eL8 (266 aa).

Basic residues predominate over residues 1–11; the sequence is MPKGKKAKGKK. Positions 1–21 are disordered; that stretch reads MPKGKKAKGKKVAPAPSVAKK.

Belongs to the eukaryotic ribosomal protein eL8 family. Component of the large ribosomal subunit.

The protein resides in the cytoplasm. Component of the large ribosomal subunit. The ribosome is a large ribonucleoprotein complex responsible for the synthesis of proteins in the cell. The protein is Large ribosomal subunit protein eL8 (rpl7a) of Ictalurus punctatus (Channel catfish).